We begin with the raw amino-acid sequence, 446 residues long: uncharacterized protein (446 aa).

3 disordered regions span residues 198–233 (SIQKQIPKQTQEQTQKQTQEQTQESSQNPHNEENYS), 309–337 (NEDNKNNMDNEEDSDESDIESDSDLDDSK), and 394–431 (SESVKSDSNESKSIKPESIKSESIKSDNSNNHKNFGNT). Residues 199-224 (IQKQIPKQTQEQTQKQTQEQTQESSQ) are compositionally biased toward low complexity. Residues 317–333 (DNEEDSDESDIESDSDL) show a composition bias toward acidic residues. The segment covering 397–418 (VKSDSNESKSIKPESIKSESIK) has biased composition (basic and acidic residues).

This is an uncharacterized protein from Acanthamoeba polyphaga mimivirus (APMV).